Reading from the N-terminus, the 219-residue chain is Dephospho-CoA kinase (219 aa).

Residues 8-215 enclose the DPCK domain; sequence LVGVTGGIGS…EAAASGPDCQ (208 aa). 16-21 serves as a coordination point for ATP; it reads GSGKST.

This sequence belongs to the CoaE family.

It is found in the cytoplasm. It carries out the reaction 3'-dephospho-CoA + ATP = ADP + CoA + H(+). It participates in cofactor biosynthesis; coenzyme A biosynthesis; CoA from (R)-pantothenate: step 5/5. Functionally, catalyzes the phosphorylation of the 3'-hydroxyl group of dephosphocoenzyme A to form coenzyme A. This is Dephospho-CoA kinase from Chlorobium luteolum (strain DSM 273 / BCRC 81028 / 2530) (Pelodictyon luteolum).